The primary structure comprises 390 residues: NADH-quinone oxidoreductase subunit D (390 aa).

Belongs to the complex I 49 kDa subunit family. In terms of assembly, NDH-1 is composed of 14 different subunits. Subunits NuoB, C, D, E, F, and G constitute the peripheral sector of the complex.

The protein resides in the cell membrane. It carries out the reaction a quinone + NADH + 5 H(+)(in) = a quinol + NAD(+) + 4 H(+)(out). Functionally, NDH-1 shuttles electrons from NADH, via FMN and iron-sulfur (Fe-S) centers, to quinones in the respiratory chain. The immediate electron acceptor for the enzyme in this species is believed to be ubiquinone. Couples the redox reaction to proton translocation (for every two electrons transferred, four hydrogen ions are translocated across the cytoplasmic membrane), and thus conserves the redox energy in a proton gradient. The chain is NADH-quinone oxidoreductase subunit D from Wolbachia pipientis subsp. Culex pipiens (strain wPip).